The chain runs to 71 residues: Conotoxin AbVIG (71 aa).

An N-terminal signal peptide occupies residues 1–17; sequence VLIIAVLFLTACQLTTA. The propeptide occupies 18–40; it reads ETSSRGKQKHRALRSTDKNSRMT. 3 disulfide bridges follow: Cys43–Cys57, Cys50–Cys61, and Cys56–Cys68.

Belongs to the conotoxin O1 superfamily. In terms of tissue distribution, expressed by the venom duct.

The protein localises to the secreted. The polypeptide is Conotoxin AbVIG (Conus abbreviatus (Abbreviated cone)).